The primary structure comprises 313 residues: Phosphate import ATP-binding protein PstB 2 (313 aa).

Residues M1–G33 show a composition bias toward polar residues. A disordered region spans residues M1–R40. The region spanning L54–I308 is the ABC transporter domain. Residue G86–S93 participates in ATP binding.

It belongs to the ABC transporter superfamily. Phosphate importer (TC 3.A.1.7) family. As to quaternary structure, the complex is composed of two ATP-binding proteins (PstB), two transmembrane proteins (PstC and PstA) and a solute-binding protein (PstS).

It localises to the cell membrane. It carries out the reaction phosphate(out) + ATP + H2O = ADP + 2 phosphate(in) + H(+). Its function is as follows. Part of the ABC transporter complex PstSACB involved in phosphate import. Responsible for energy coupling to the transport system. The chain is Phosphate import ATP-binding protein PstB 2 from Haloarcula marismortui (strain ATCC 43049 / DSM 3752 / JCM 8966 / VKM B-1809) (Halobacterium marismortui).